The primary structure comprises 496 residues: Glutamyl-tRNA(Gln) amidotransferase subunit A (496 aa).

Active-site charge relay system residues include Lys-79 and Ser-159. Ser-183 functions as the Acyl-ester intermediate in the catalytic mechanism.

This sequence belongs to the amidase family. GatA subfamily. As to quaternary structure, heterotrimer of A, B and C subunits.

The enzyme catalyses L-glutamyl-tRNA(Gln) + L-glutamine + ATP + H2O = L-glutaminyl-tRNA(Gln) + L-glutamate + ADP + phosphate + H(+). In terms of biological role, allows the formation of correctly charged Gln-tRNA(Gln) through the transamidation of misacylated Glu-tRNA(Gln) in organisms which lack glutaminyl-tRNA synthetase. The reaction takes place in the presence of glutamine and ATP through an activated gamma-phospho-Glu-tRNA(Gln). The polypeptide is Glutamyl-tRNA(Gln) amidotransferase subunit A (Ruegeria pomeroyi (strain ATCC 700808 / DSM 15171 / DSS-3) (Silicibacter pomeroyi)).